A 775-amino-acid chain; its full sequence is Endothelin-converting enzyme-like 1 (775 aa).

Residues methionine 1 to cysteine 61 are Cytoplasmic-facing. Residues cysteine 23–glycine 51 are disordered. Low complexity predominate over residues serine 32–glycine 51. A helical; Signal-anchor for type II membrane protein transmembrane segment spans residues leucine 62–leucine 82. At lysine 83–tryptophan 775 the chain is on the lumenal side. Positions glycine 99–tryptophan 775 constitute a Peptidase M13 domain. 4 cysteine pairs are disulfide-bonded: cysteine 124-cysteine 760, cysteine 132-cysteine 720, cysteine 188-cysteine 441, and cysteine 649-cysteine 772. Asparagine 255 and asparagine 322 each carry an N-linked (GlcNAc...) asparagine glycan. Residue histidine 612 coordinates Zn(2+). Residue glutamate 613 is part of the active site. Histidine 616 lines the Zn(2+) pocket. Residue asparagine 656 is glycosylated (N-linked (GlcNAc...) asparagine). Glutamate 672 is a Zn(2+) binding site. Aspartate 676 serves as the catalytic Proton donor.

Belongs to the peptidase M13 family. Zn(2+) serves as cofactor. Highly expressed in the CNS, in particular in neurons of the caudate putamen, diagonal band, the paraventricular nucleus of the thalamus, part of the hypothalamus, in cranial motor nuclei, inferior olive, and substantia gelatinosa of the spinal tract trigeminal nucleus. Not detected in cerebral cortex, hippocampus and cerebellum.

It localises to the membrane. In terms of biological role, may contribute to the degradation of peptide hormones and be involved in the inactivation of neuronal peptides. Cleaves the synthetic substrate Z-Gly-Gly-Leu-pNA and releases pNA. May protect against C2-ceramide-induced apoptosis. This chain is Endothelin-converting enzyme-like 1 (Ecel1), found in Rattus norvegicus (Rat).